Consider the following 420-residue polypeptide: Histidine--tRNA ligase (420 aa).

The protein belongs to the class-II aminoacyl-tRNA synthetase family. Homodimer.

The protein localises to the cytoplasm. It catalyses the reaction tRNA(His) + L-histidine + ATP = L-histidyl-tRNA(His) + AMP + diphosphate + H(+). In Thermotoga petrophila (strain ATCC BAA-488 / DSM 13995 / JCM 10881 / RKU-1), this protein is Histidine--tRNA ligase.